The chain runs to 235 residues: MSVHIEAKQGEIAESILLPGDPLRAKYIAETFLEDVTCYNNVRGMLGFTGTYKGKRVSVQGTGMGVPSISIYVNELIQSYGVKNLIRVGTCGAIQKDVKVRDVIIAMTACTDSNMNRLTFPGFDFAPAANFDLLKKAYDAGTEKGLHVRVGNVLTADVFYRESMDIVKKLGDYGVLAVEMETTALYTLAAKYGVNALSVLTVSDHIFTGEETTSEERQTTFNEMIEIALDAAIQQ.

An a purine D-ribonucleoside-binding site is contributed by histidine 4. Phosphate is bound by residues glycine 20, arginine 24, arginine 43, and 87-90; that span reads RVGT. Residues glutamate 162, 179–181, and 203–204 each bind a purine D-ribonucleoside; these read EME and SD. The active-site Proton donor is aspartate 204.

This sequence belongs to the PNP/UDP phosphorylase family. As to quaternary structure, homohexamer; trimer of homodimers.

It carries out the reaction a purine D-ribonucleoside + phosphate = a purine nucleobase + alpha-D-ribose 1-phosphate. It catalyses the reaction a purine 2'-deoxy-D-ribonucleoside + phosphate = a purine nucleobase + 2-deoxy-alpha-D-ribose 1-phosphate. Its function is as follows. Catalyzes the reversible phosphorolytic breakdown of the N-glycosidic bond in the beta-(deoxy)ribonucleoside molecules, with the formation of the corresponding free purine bases and pentose-1-phosphate. The protein is Purine nucleoside phosphorylase DeoD-type of Bacillus cereus (strain ATCC 14579 / DSM 31 / CCUG 7414 / JCM 2152 / NBRC 15305 / NCIMB 9373 / NCTC 2599 / NRRL B-3711).